Reading from the N-terminus, the 1100-residue chain is Conjugal transfer protein TraA (1100 aa).

404–411 (GRAGAGKT) contributes to the ATP binding site.

This sequence belongs to the MobA/MobL family.

The sequence is that of Conjugal transfer protein TraA (traA) from Agrobacterium fabrum (strain C58 / ATCC 33970) (Agrobacterium tumefaciens (strain C58)).